The primary structure comprises 296 residues: Probable AP endonuclease (296 aa).

A disulfide bridge connects residues Cys16 and Cys20. 8 residues coordinate Zn(2+): His78, His115, Glu142, His182, His218, Asp231, His233, and Glu271.

This sequence belongs to the AP endonuclease 2 family. Zn(2+) serves as cofactor.

Its subcellular location is the host nucleus. The protein resides in the host cytoplasm. It is found in the virion. In terms of biological role, endonuclease that plays a role in DNA repair. Cleaves phosphodiester bonds on the 5' side of apurinic or apyrimidinic sites (AP sites). In addition to endonuclease activity, the ASFV enzyme has a proofreading 3'-5' exonuclease activity that is considerably more efficient in the elimination of a mismatch than in that of a correctly paired base. Displays 3'-phosphatase and 3'-repair diesterase activities. The single nucleotide gaps generated by the AP endonuclease are filled by the viral AP endonuclease and DNA ligase. The chain is Probable AP endonuclease from Ornithodoros (relapsing fever ticks).